The sequence spans 264 residues: Thymidylate synthase (264 aa).

Arg21 contacts dUMP. Residue His51 coordinates (6R)-5,10-methylene-5,6,7,8-tetrahydrofolate. Arg126 to Arg127 is a binding site for dUMP. The active-site Nucleophile is Cys146. Residues Arg166–Asp169, Asn177, and His207–Tyr209 contribute to the dUMP site. Asp169 contacts (6R)-5,10-methylene-5,6,7,8-tetrahydrofolate. Ala263 contacts (6R)-5,10-methylene-5,6,7,8-tetrahydrofolate.

This sequence belongs to the thymidylate synthase family. Bacterial-type ThyA subfamily. Homodimer.

The protein resides in the cytoplasm. The enzyme catalyses dUMP + (6R)-5,10-methylene-5,6,7,8-tetrahydrofolate = 7,8-dihydrofolate + dTMP. It functions in the pathway pyrimidine metabolism; dTTP biosynthesis. Functionally, catalyzes the reductive methylation of 2'-deoxyuridine-5'-monophosphate (dUMP) to 2'-deoxythymidine-5'-monophosphate (dTMP) while utilizing 5,10-methylenetetrahydrofolate (mTHF) as the methyl donor and reductant in the reaction, yielding dihydrofolate (DHF) as a by-product. This enzymatic reaction provides an intracellular de novo source of dTMP, an essential precursor for DNA biosynthesis. The sequence is that of Thymidylate synthase from Pseudomonas aeruginosa (strain LESB58).